Consider the following 127-residue polypeptide: Large ribosomal subunit protein eL8 (127 aa).

This sequence belongs to the eukaryotic ribosomal protein eL8 family. As to quaternary structure, part of the 50S ribosomal subunit. Probably part of the RNase P complex.

Its subcellular location is the cytoplasm. In terms of biological role, multifunctional RNA-binding protein that recognizes the K-turn motif in ribosomal RNA, the RNA component of RNase P, box H/ACA, box C/D and box C'/D' sRNAs. This Desulfurococcus amylolyticus (strain DSM 18924 / JCM 16383 / VKM B-2413 / 1221n) (Desulfurococcus kamchatkensis) protein is Large ribosomal subunit protein eL8.